Here is a 311-residue protein sequence, read N- to C-terminus: Ribonuclease HIII (311 aa).

Residues 95–311 enclose the RNase H type-2 domain; it reads MSIVGSDEVG…NTEKAFRLLK (217 aa). Positions 101, 102, and 206 each coordinate a divalent metal cation.

This sequence belongs to the RNase HII family. RnhC subfamily. Mn(2+) is required as a cofactor. It depends on Mg(2+) as a cofactor.

It is found in the cytoplasm. It carries out the reaction Endonucleolytic cleavage to 5'-phosphomonoester.. Endonuclease that specifically degrades the RNA of RNA-DNA hybrids. This chain is Ribonuclease HIII, found in Bacillus cereus (strain AH187).